We begin with the raw amino-acid sequence, 412 residues long: Short-chain specific acyl-CoA dehydrogenase, mitochondrial (412 aa).

The transit peptide at 1-24 (MAATLLARACGLVRGAPWPWGWRR) directs the protein to the mitochondrion. Threonine 27 carries the phosphothreonine modification. At lysine 51 the chain carries N6-acetyllysine; alternate. Lysine 51 carries the N6-succinyllysine; alternate modification. Position 72 is an N6-acetyllysine (lysine 72). Lysine 129 is subject to N6-acetyllysine; alternate. N6-succinyllysine; alternate is present on lysine 129. FAD contacts are provided by residues 152–161 (FALSEPGNGS) and 185–187 (WIT). Serine 161 serves as a coordination point for substrate. Position 208 is an N6-acetyllysine (lysine 208). An N6-acetyllysine; alternate modification is found at lysine 262. Lysine 262 carries the post-translational modification N6-succinyllysine; alternate. Residue 269–272 (DTGR) participates in substrate binding. An FAD-binding site is contributed by arginine 297. An N6-acetyllysine; alternate modification is found at lysine 306. An N6-succinyllysine; alternate modification is found at lysine 306. Residues glutamine 308 and 365-369 (QILGG) each bind FAD. Glutamate 392 serves as the catalytic Proton acceptor. Glycine 393 provides a ligand contact to substrate. Residue 394 to 396 (TSE) participates in FAD binding.

It belongs to the acyl-CoA dehydrogenase family. In terms of assembly, homotetramer. The cofactor is FAD.

It is found in the mitochondrion matrix. The catalysed reaction is a short-chain 2,3-saturated fatty acyl-CoA + oxidized [electron-transfer flavoprotein] + H(+) = a short-chain (2E)-enoyl-CoA + reduced [electron-transfer flavoprotein]. It catalyses the reaction butanoyl-CoA + oxidized [electron-transfer flavoprotein] + H(+) = (2E)-butenoyl-CoA + reduced [electron-transfer flavoprotein]. It carries out the reaction pentanoyl-CoA + oxidized [electron-transfer flavoprotein] + H(+) = (2E)-pentenoyl-CoA + reduced [electron-transfer flavoprotein]. The enzyme catalyses hexanoyl-CoA + oxidized [electron-transfer flavoprotein] + H(+) = (2E)-hexenoyl-CoA + reduced [electron-transfer flavoprotein]. It functions in the pathway lipid metabolism; mitochondrial fatty acid beta-oxidation. Its function is as follows. Short-chain specific acyl-CoA dehydrogenase is one of the acyl-CoA dehydrogenases that catalyze the first step of mitochondrial fatty acid beta-oxidation, an aerobic process breaking down fatty acids into acetyl-CoA and allowing the production of energy from fats. The first step of fatty acid beta-oxidation consists in the removal of one hydrogen from C-2 and C-3 of the straight-chain fatty acyl-CoA thioester, resulting in the formation of trans-2-enoyl-CoA. Among the different mitochondrial acyl-CoA dehydrogenases, short-chain specific acyl-CoA dehydrogenase acts specifically on acyl-CoAs with saturated 4 to 6 carbons long primary chains. This chain is Short-chain specific acyl-CoA dehydrogenase, mitochondrial (ACADS), found in Bos taurus (Bovine).